The sequence spans 293 residues: Outer membrane protein assembly factor BamD (293 aa).

The first 26 residues, 1 to 26 (MIQRPTFFSPIHLLAVLLATFILITG), serve as a signal peptide directing secretion. Cys27 carries the N-palmitoyl cysteine lipid modification. Cys27 is lipidated: S-diacylglycerol cysteine.

The protein belongs to the BamD family. Part of the Bam complex.

The protein localises to the cell outer membrane. Functionally, part of the outer membrane protein assembly complex, which is involved in assembly and insertion of beta-barrel proteins into the outer membrane. This chain is Outer membrane protein assembly factor BamD, found in Xylella fastidiosa (strain Temecula1 / ATCC 700964).